A 147-amino-acid chain; its full sequence is Lysozyme C, tracheal isozyme (147 aa).

Residues 1–18 form the signal peptide; the sequence is MKALLILGLLLLSVAVQG. One can recognise a C-type lysozyme domain in the interval 19-147; the sequence is KTFKRCELAK…LTSYVKGCGV (129 aa). Cystine bridges form between C24/C145, C48/C133, C83/C99, and C95/C113. Residues E53 and D71 contribute to the active site.

The protein belongs to the glycosyl hydrolase 22 family. In terms of assembly, monomer. In terms of tissue distribution, trachea.

The catalysed reaction is Hydrolysis of (1-&gt;4)-beta-linkages between N-acetylmuramic acid and N-acetyl-D-glucosamine residues in a peptidoglycan and between N-acetyl-D-glucosamine residues in chitodextrins.. Its function is as follows. Lysozymes have primarily a bacteriolytic function; those in tissues and body fluids are associated with the monocyte-macrophage system and enhance the activity of immunoagents. This chain is Lysozyme C, tracheal isozyme, found in Bos taurus (Bovine).